Reading from the N-terminus, the 140-residue chain is Natriuretic peptides B (140 aa).

A signal peptide spans 1–26 (MEPCAALPRALLLLLFLHLSPLGGRP). The interval 71–94 (LEPLHRSHSPAEAPEAGGTPRGVL) is disordered. A disulfide bridge connects residues cysteine 118 and cysteine 134.

Belongs to the natriuretic peptide family. The precursor molecule is proteolytically cleaved by the endoproteases FURIN or CORIN at Arg-108 to produce the brain natriuretic peptide 32. CORIN also cleaves the precursor molecule at additional residues including Arg-105, Arg-108 and possibly Lys-111. In terms of processing, undergoes further proteolytic cleavage by various proteases such as DPP4, MME and possibly FAP, to give rise to a variety of shorter peptides. Cleaved at Pro-110 by the prolyl endopeptidase FAP (seprase) activity (in vitro). Degraded by IDE. During IDE degradation, the resulting products initially increase the activation of NPR1 and can also stimulate NPR2 to produce cGMP before the fragments are completely degraded and inactivated by IDE (in vitro). Brain and also in atria, but at much lower levels than ANP.

It localises to the secreted. In terms of biological role, cardiac hormone that plays a key role in mediating cardio-renal homeostasis. May also function as a paracrine antifibrotic factor in the heart. Acts by specifically binding and stimulating NPR1 to produce cGMP, which in turn activates effector proteins that drive various biological responses. Involved in regulating the extracellular fluid volume and maintaining the fluid-electrolyte balance through natriuresis, diuresis, vasorelaxation, and inhibition of renin and aldosterone secretion. Binds the clearance receptor NPR3. May affect cardio-renal homeostasis. Able to promote the production of cGMP although its potency is very low compared to brain natriuretic peptide 32. This is Natriuretic peptides B (NPPB) from Canis lupus familiaris (Dog).